The primary structure comprises 343 residues: Ubiquitin thioesterase OTU1 (343 aa).

The interval 45–123 (RCKAKGGTHV…IVEEDQTRPK (79 aa)) is UBX-like. An OTU domain is found at 144–269 (LTRTAVPADN…GIHYDPLQRN (126 aa)). Residues 149–155 (VPADNSC) are cys-loop. Residue D152 is part of the active site. C155 acts as the Nucleophile in catalysis. Positions 208–218 (IRRDDTWGGAI) are variable-loop. The interval 258–262 (YDGIH) is his-loop. Position 261 (I261) interacts with substrate. The active site involves H262. The tract at residues 286-291 (DIVLVQ) is S2 site. A C2H2-type zinc finger spans residues 313–337 (LRCMLCQKGLTGQAEARDHARETGH). H337 is a catalytic residue.

In terms of assembly, interacts with VCP; the interaction is direct. Interacts with FAF2/UBXD8. Interacts with DERL1; however interaction is dependent on the UBAX-like region, suggesting that it may be indirect. Interacts with PLAA, UBXN6 and VCP; may form a complex involved in macroautophagy.

The protein localises to the cytoplasm. It catalyses the reaction Thiol-dependent hydrolysis of ester, thioester, amide, peptide and isopeptide bonds formed by the C-terminal Gly of ubiquitin (a 76-residue protein attached to proteins as an intracellular targeting signal).. Its function is as follows. Hydrolase that can remove conjugated ubiquitin from proteins and participates in endoplasmic reticulum-associated degradation (ERAD) for misfolded lumenal proteins. May act by triming the ubiquitin chain on the associated substrate to facilitate their threading through the VCP/p97 pore. Ubiquitin moieties on substrates may present a steric impediment to the threading process when the substrate is transferred to the VCP pore and threaded through VCP's axial channel. Mediates deubiquitination of 'Lys-27'-, 'Lys-29'- and 'Lys-33'-linked polyubiquitin chains. Also able to hydrolyze 'Lys-11'-linked ubiquitin chains. Cleaves both polyubiquitin and di-ubiquitin. May play a role in macroautophagy, regulating for instance the clearance of damaged lysosomes. May recruit PLAA, UBXN6 and VCP to damaged lysosome membranes decorated with K48-linked ubiquitin chains and remove these chains allowing autophagosome formation. The protein is Ubiquitin thioesterase OTU1 (Yod1) of Rattus norvegicus (Rat).